Here is a 920-residue protein sequence, read N- to C-terminus: 2-oxoglutarate dehydrogenase E1 component (920 aa).

It belongs to the alpha-ketoglutarate dehydrogenase family. Homodimer. Part of the 2-oxoglutarate dehydrogenase (OGDH) complex composed of E1 (2-oxoglutarate dehydrogenase), E2 (dihydrolipoamide succinyltransferase) and E3 (dihydrolipoamide dehydrogenase); the complex contains multiple copies of the three enzymatic components (E1, E2 and E3). Requires thiamine diphosphate as cofactor.

It catalyses the reaction N(6)-[(R)-lipoyl]-L-lysyl-[protein] + 2-oxoglutarate + H(+) = N(6)-[(R)-S(8)-succinyldihydrolipoyl]-L-lysyl-[protein] + CO2. E1 component of the 2-oxoglutarate dehydrogenase (OGDH) complex which catalyzes the decarboxylation of 2-oxoglutarate, the first step in the conversion of 2-oxoglutarate to succinyl-CoA and CO(2). This is 2-oxoglutarate dehydrogenase E1 component from Leptospira interrogans serogroup Icterohaemorrhagiae serovar copenhageni (strain Fiocruz L1-130).